The following is a 376-amino-acid chain: Chaperone protein DnaJ (376 aa).

The J domain occupies 4–70 (DYYQILGVSK…QKRAAYDRFG (67 aa)). The segment at 139–217 (GVEKNISFSS…CHGLGRYHKQ (79 aa)) adopts a CR-type zinc-finger fold. Zn(2+) contacts are provided by C152, C155, C169, C172, C191, C194, C205, and C208. CXXCXGXG motif repeat units follow at residues 152-159 (CDTCHGSG), 169-176 (CDACGGVG), 191-198 (CHKCQGNG), and 205-212 (CKKCHGLG).

It belongs to the DnaJ family. As to quaternary structure, homodimer. The cofactor is Zn(2+).

Its subcellular location is the cytoplasm. Its function is as follows. Participates actively in the response to hyperosmotic and heat shock by preventing the aggregation of stress-denatured proteins and by disaggregating proteins, also in an autonomous, DnaK-independent fashion. Unfolded proteins bind initially to DnaJ; upon interaction with the DnaJ-bound protein, DnaK hydrolyzes its bound ATP, resulting in the formation of a stable complex. GrpE releases ADP from DnaK; ATP binding to DnaK triggers the release of the substrate protein, thus completing the reaction cycle. Several rounds of ATP-dependent interactions between DnaJ, DnaK and GrpE are required for fully efficient folding. Also involved, together with DnaK and GrpE, in the DNA replication of plasmids through activation of initiation proteins. This is Chaperone protein DnaJ from Rickettsia bellii (strain OSU 85-389).